The sequence spans 431 residues: Tryptophan synthase beta chain (431 aa).

An N6-(pyridoxal phosphate)lysine modification is found at Lys-109.

The protein belongs to the TrpB family. As to quaternary structure, tetramer of two alpha and two beta chains. Pyridoxal 5'-phosphate is required as a cofactor.

It catalyses the reaction (1S,2R)-1-C-(indol-3-yl)glycerol 3-phosphate + L-serine = D-glyceraldehyde 3-phosphate + L-tryptophan + H2O. It participates in amino-acid biosynthesis; L-tryptophan biosynthesis; L-tryptophan from chorismate: step 5/5. The beta subunit is responsible for the synthesis of L-tryptophan from indole and L-serine. This Deinococcus radiodurans (strain ATCC 13939 / DSM 20539 / JCM 16871 / CCUG 27074 / LMG 4051 / NBRC 15346 / NCIMB 9279 / VKM B-1422 / R1) protein is Tryptophan synthase beta chain.